Here is a 346-residue protein sequence, read N- to C-terminus: Nicotinate-nucleotide--dimethylbenzimidazole phosphoribosyltransferase (346 aa).

The active-site Proton acceptor is glutamate 312.

Belongs to the CobT family.

It catalyses the reaction 5,6-dimethylbenzimidazole + nicotinate beta-D-ribonucleotide = alpha-ribazole 5'-phosphate + nicotinate + H(+). Its pathway is nucleoside biosynthesis; alpha-ribazole biosynthesis; alpha-ribazole from 5,6-dimethylbenzimidazole: step 1/2. Catalyzes the synthesis of alpha-ribazole-5'-phosphate from nicotinate mononucleotide (NAMN) and 5,6-dimethylbenzimidazole (DMB). The polypeptide is Nicotinate-nucleotide--dimethylbenzimidazole phosphoribosyltransferase (Cupriavidus taiwanensis (strain DSM 17343 / BCRC 17206 / CCUG 44338 / CIP 107171 / LMG 19424 / R1) (Ralstonia taiwanensis (strain LMG 19424))).